The sequence spans 206 residues: MMLTLALPKGRLAEESIDLMISKGWLSSKPDPNSKELIYNDPKGKIRILLVRSQDVATYVEQCAADAGISGWDVLKEGGYDLATPLDLKIGKCRLSLAAPNGFTLEAHHRKIRVATKYPNLAREFFFLKGLSCEIFKLYGSIELAPLVGLSDCIVDLVSTGGTLKANGLKELDIILESSARLVFNRSSLYGKRKEAVEFMDSLSKI.

This sequence belongs to the ATP phosphoribosyltransferase family. Short subfamily. As to quaternary structure, heteromultimer composed of HisG and HisZ subunits.

The protein resides in the cytoplasm. It catalyses the reaction 1-(5-phospho-beta-D-ribosyl)-ATP + diphosphate = 5-phospho-alpha-D-ribose 1-diphosphate + ATP. It functions in the pathway amino-acid biosynthesis; L-histidine biosynthesis; L-histidine from 5-phospho-alpha-D-ribose 1-diphosphate: step 1/9. Its function is as follows. Catalyzes the condensation of ATP and 5-phosphoribose 1-diphosphate to form N'-(5'-phosphoribosyl)-ATP (PR-ATP). Has a crucial role in the pathway because the rate of histidine biosynthesis seems to be controlled primarily by regulation of HisG enzymatic activity. The sequence is that of ATP phosphoribosyltransferase from Leptospira interrogans serogroup Icterohaemorrhagiae serovar copenhageni (strain Fiocruz L1-130).